The following is a 49-amino-acid chain: Large ribosomal subunit protein uL16 (49 aa).

It belongs to the universal ribosomal protein uL16 family. In terms of assembly, part of the 50S ribosomal subunit.

In terms of biological role, binds 23S rRNA and is also seen to make contacts with the A and possibly P site tRNAs. The sequence is that of Large ribosomal subunit protein uL16 (rplP) from Aquifex pyrophilus.